The following is a 174-amino-acid chain: Small ribosomal subunit protein uS5 (174 aa).

The region spanning 16–79 (FSELIVSVRR…NAARKNMIRV (64 aa)) is the S5 DRBM domain.

It belongs to the universal ribosomal protein uS5 family. In terms of assembly, part of the 30S ribosomal subunit. Contacts proteins S4 and S8.

With S4 and S12 plays an important role in translational accuracy. Its function is as follows. Located at the back of the 30S subunit body where it stabilizes the conformation of the head with respect to the body. In Ehrlichia ruminantium (strain Gardel), this protein is Small ribosomal subunit protein uS5.